The sequence spans 389 residues: Gibberellin 20 oxidase 2 (389 aa).

The segment covering 1–17 (MVAEHPTPPQPHQPPPM) has biased composition (pro residues). Residues 1–23 (MVAEHPTPPQPHQPPPMDSTAGS) form a disordered region. The 101-residue stretch at 224–324 (DSSSIMRCNY…RRSLAFFLCP (101 aa)) folds into the Fe2OG dioxygenase domain. Fe cation-binding residues include histidine 249, aspartate 251, and histidine 305. Residue arginine 315 is part of the active site.

This sequence belongs to the iron/ascorbate-dependent oxidoreductase family. GA20OX subfamily. Fe cation is required as a cofactor. Requires L-ascorbate as cofactor.

It catalyses the reaction gibberellin A12 + 2 2-oxoglutarate + 3 O2 + H(+) = gibberellin A9 + 2 succinate + 3 CO2 + 2 H2O. It carries out the reaction gibberellin A53 + 2 2-oxoglutarate + 3 O2 + H(+) = gibberellin A20 + 2 succinate + 3 CO2 + 2 H2O. In terms of biological role, key oxidase enzyme in the biosynthesis of gibberellin that catalyzes the conversion of GA53 to GA20 via a three-step oxidation at C-20 of the GA skeleton. This Oryza sativa subsp. indica (Rice) protein is Gibberellin 20 oxidase 2 (20ox2).